The following is a 325-amino-acid chain: Acetyl-coenzyme A carboxylase carboxyl transferase subunit alpha (325 aa).

Residues 38–292 (RLEERLSKLQ…DGILKETLKS (255 aa)) form the CoA carboxyltransferase C-terminal domain.

Belongs to the AccA family. As to quaternary structure, acetyl-CoA carboxylase is a heterohexamer composed of biotin carboxyl carrier protein (AccB), biotin carboxylase (AccC) and two subunits each of ACCase subunit alpha (AccA) and ACCase subunit beta (AccD).

The protein resides in the cytoplasm. The catalysed reaction is N(6)-carboxybiotinyl-L-lysyl-[protein] + acetyl-CoA = N(6)-biotinyl-L-lysyl-[protein] + malonyl-CoA. It functions in the pathway lipid metabolism; malonyl-CoA biosynthesis; malonyl-CoA from acetyl-CoA: step 1/1. In terms of biological role, component of the acetyl coenzyme A carboxylase (ACC) complex. First, biotin carboxylase catalyzes the carboxylation of biotin on its carrier protein (BCCP) and then the CO(2) group is transferred by the carboxyltransferase to acetyl-CoA to form malonyl-CoA. The polypeptide is Acetyl-coenzyme A carboxylase carboxyl transferase subunit alpha (Bacillus velezensis (strain DSM 23117 / BGSC 10A6 / LMG 26770 / FZB42) (Bacillus amyloliquefaciens subsp. plantarum)).